A 141-amino-acid polypeptide reads, in one-letter code: Hemoglobin subunit alpha-D (141 aa).

Positions 1–141 constitute a Globin domain; the sequence is MLTEDEKQLI…VSAVLAEKYR (141 aa). Residues His58 and His87 each contribute to the heme b site.

Belongs to the globin family. In terms of assembly, heterotetramer of two alpha-D chains and two beta chains. Red blood cells.

In terms of biological role, involved in oxygen transport from the lung to the various peripheral tissues. The protein is Hemoglobin subunit alpha-D (HBAD) of Chelonoidis carbonarius (Red-footed tortoise).